The sequence spans 59 residues: Small ribosomal subunit protein bS21A (59 aa).

Belongs to the bacterial ribosomal protein bS21 family.

The polypeptide is Small ribosomal subunit protein bS21A (Gloeobacter violaceus (strain ATCC 29082 / PCC 7421)).